A 160-amino-acid polypeptide reads, in one-letter code: Protein max (160 aa).

The segment covering 1 to 13 has biased composition (acidic residues); it reads MSDNDDIEVESDE. The segment at 1–40 is disordered; the sequence is MSDNDDIEVESDEEQPRFQSAADKRAHHNALERKRRDHIK. N-acetylserine is present on Ser-2. Ser-2 and Ser-11 each carry phosphoserine. Positions 23–74 constitute a bHLH domain; sequence DKRAHHNALERKRRDHIKDSFHSLRDSVPSLQGEKASRAQILDKATEYIQYM. A compositionally biased stretch (basic and acidic residues) spans 29-40; that stretch reads NALERKRRDHIK. Residue Lys-66 is modified to N6-acetyllysine. Residues 81-102 are leucine-zipper; sequence HQQDIDDLKRQNALLEQQVRAL. A disordered region spans residues 104-160; the sequence is KARSSAQLQTNYPSSDNSLYTNAKGGTISAFDGGSDSSSESEPEEPQSRKKLRMEAS. Ser-107 is subject to Phosphoserine. Residues 107 to 124 are compositionally biased toward polar residues; the sequence is SSAQLQTNYPSSDNSLYT. 2 positions are modified to N6-acetyllysine: Lys-153 and Lys-154.

It belongs to the MAX family. As to quaternary structure, efficient DNA binding requires dimerization with another bHLH protein. Binds DNA as a heterodimer with MYC or MAD. Part of the E2F6.com-1 complex in G0 phase composed of E2F6, MGA, MAX, TFDP1, CBX3, BAT8, EUHMTASE1, RING1, RNF2, MBLR, L3MBTL2 and YAF2. Component of some MLL1/MLL complex, at least composed of the core components KMT2A/MLL1, ASH2L, HCFC1/HCF1, WDR5 and RBBP5, as well as the facultative components BACC1, CHD8, E2F6, HSP70, INO80C, KANSL1, LAS1L, MAX, MCRS1, MGA, MYST1/MOF, PELP1, PHF20, PRP31, RING2, RUVB1/TIP49A, RUVB2/TIP49B, SENP3, TAF1, TAF4, TAF6, TAF7, TAF9 and TEX10. Interacts with SPAG9. The heterodimer MYC:MAX interacts with ABI1; the interaction may enhance MYC:MAX transcriptional activity. Post-translationally, phosphorylated.

The protein localises to the nucleus. The protein resides in the cell projection. It localises to the dendrite. In terms of biological role, transcription regulator. Forms a sequence-specific DNA-binding protein complex with MYC or MAD which recognizes the core sequence 5'-CAC[GA]TG-3'. The MYC:MAX complex is a transcriptional activator, whereas the MAD:MAX complex is a repressor. CpG methylation of the recognition site greatly inhibits DNA binding, suggesting that DNA methylation may regulate the MYC:MAX complex in vivo. May repress transcription via the recruitment of a chromatin remodeling complex containing H3 'Lys-9' histone methyltransferase activity. Represses MYC transcriptional activity from E-box elements. The polypeptide is Protein max (Mus musculus (Mouse)).